Reading from the N-terminus, the 212-residue chain is Large ribosomal subunit protein uL3 (212 aa).

Residues 136 to 155 are disordered; that stretch reads THGNSVSHRVLGSTGQNQTP. The residue at position 153 (Gln-153) is an N5-methylglutamine.

The protein belongs to the universal ribosomal protein uL3 family. In terms of assembly, part of the 50S ribosomal subunit. Forms a cluster with proteins L14 and L19. Post-translationally, methylated by PrmB.

In terms of biological role, one of the primary rRNA binding proteins, it binds directly near the 3'-end of the 23S rRNA, where it nucleates assembly of the 50S subunit. The polypeptide is Large ribosomal subunit protein uL3 (Acinetobacter baumannii (strain AB307-0294)).